A 422-amino-acid chain; its full sequence is 5'-deoxyadenosine deaminase (422 aa).

2 residues coordinate Zn(2+): H57 and H59. Substrate contacts are provided by E86 and H178. H205 is a binding site for Zn(2+). Substrate is bound by residues E208 and D294. D294 serves as a coordination point for Zn(2+).

Belongs to the metallo-dependent hydrolases superfamily. MTA/SAH deaminase family. In terms of assembly, homotetramer. It depends on Zn(2+) as a cofactor.

The enzyme catalyses 5'-deoxyadenosine + H2O + H(+) = 5'-deoxyinosine + NH4(+). It catalyses the reaction S-adenosyl-L-homocysteine + H2O + H(+) = S-inosyl-L-homocysteine + NH4(+). The catalysed reaction is S-methyl-5'-thioadenosine + H2O + H(+) = S-methyl-5'-thioinosine + NH4(+). It carries out the reaction adenosine + H2O + H(+) = inosine + NH4(+). It functions in the pathway amino-acid biosynthesis; S-adenosyl-L-methionine biosynthesis. Functionally, catalyzes the deamination of three SAM-derived enzymatic products, namely 5'-deoxyadenosine, S-adenosyl-L-homocysteine, and 5'-methylthioadenosine, to produce the inosine analogs. Can also deaminate adenosine. The preferred substrate for this enzyme is 5'-deoxyadenosine, but all these substrates are efficiently deaminated. Likely functions in a S-adenosyl-L-methionine (SAM) recycling pathway from S-adenosyl-L-homocysteine (SAH) produced from SAM-dependent methylation reactions. May also be involved in the recycling of 5'-deoxyadenosine, whereupon the 5'-deoxyribose moiety of 5'-deoxyinosine is further metabolized to deoxyhexoses used for the biosynthesis of aromatic amino acids in methanogens. This Methanococcus maripaludis (strain C6 / ATCC BAA-1332) protein is 5'-deoxyadenosine deaminase.